The following is a 188-amino-acid chain: dCTP deaminase (188 aa).

Residues 111-116 (KSTYAR), 135-137 (TLE), glutamine 156, tyrosine 170, and glutamine 180 each bind dCTP. Glutamate 137 (proton donor/acceptor) is an active-site residue.

It belongs to the dCTP deaminase family. Homotrimer.

The enzyme catalyses dCTP + H2O + H(+) = dUTP + NH4(+). It functions in the pathway pyrimidine metabolism; dUMP biosynthesis; dUMP from dCTP (dUTP route): step 1/2. In terms of biological role, catalyzes the deamination of dCTP to dUTP. The polypeptide is dCTP deaminase (Nitrosomonas europaea (strain ATCC 19718 / CIP 103999 / KCTC 2705 / NBRC 14298)).